An 85-amino-acid polypeptide reads, in one-letter code: Kappa-theraphotoxin-Gr1a (85 aa).

The first 21 residues, 1–21 (MKTSVFAAILGLALFAVLCSG), serve as a signal peptide directing secretion. Residues 22–49 (SELQEKDLKETLLSAIMETALEAQPEER) constitute a propeptide that is removed on maturation. Disulfide bonds link Cys-51–Cys-65, Cys-58–Cys-70, and Cys-64–Cys-77. The involved in active face stretch occupies residues 53-55 (YLF).

The protein belongs to the neurotoxin 10 (Hwtx-1) family. 09 (HaTx) subfamily. As to expression, expressed by the venom gland.

Its subcellular location is the secreted. Its function is as follows. Inhibits Kv2.1/KCNB1 and Kv4.2/KCND2 voltage-gated potassium channels. Acts as a gating modifier by shifting channel openings to more depolarized voltages and acts via the occupancy of multiple binding sites on the channel. The toxin binding sites are situated on the S3-S4 extracellular linker of the channel. At least two hanatoxin molecules can occupy the Kv2.1/KCNB1 channel, and maybe more (three or four). Can also inhibit calcium channels (Cav2.1/CACNA1A). Needs to partition into the membrane in order to bind to the channel. The polypeptide is Kappa-theraphotoxin-Gr1a (Grammostola rosea (Chilean rose tarantula)).